Consider the following 331-residue polypeptide: MVQGSVNLNTERGKEWLQDYVDNWVNFYQKQTDEGKVASYIPRLEHADPNALGISIIGKNGTVIRSGDTDLEFSIQSISKVLSFIVACMERGLSYVLQRVDVEPTGESFNSIMHLEINQPKKPFNPLVNSGAITVSSLLNGRTSDQKLEPLYQLLEKILGHRPEIDVEVYVSERDTSMRNRAIGYYLLEEGYLESDLSITLETYFKHCSLNVTVDDLAMIGLVLSNDGVHPNTDEPLIPKQIARVAKSLMLTCGMYDASGKFASYVGIPAKSGVSGGILAVVPPRVRDQNLPFLEGCGIGVFGPALDKQGNSIAGIKLLRHIANQWDLSLF.

Ser77, Asn129, Glu173, Asn180, Tyr204, Tyr256, and Val274 together coordinate substrate.

The protein belongs to the glutaminase family. In terms of assembly, homotetramer.

It catalyses the reaction L-glutamine + H2O = L-glutamate + NH4(+). The protein is Glutaminase of Oceanobacillus iheyensis (strain DSM 14371 / CIP 107618 / JCM 11309 / KCTC 3954 / HTE831).